Here is an 89-residue protein sequence, read N- to C-terminus: Small ribosomal subunit protein uS17 (89 aa).

Belongs to the universal ribosomal protein uS17 family. As to quaternary structure, part of the 30S ribosomal subunit.

In terms of biological role, one of the primary rRNA binding proteins, it binds specifically to the 5'-end of 16S ribosomal RNA. In Ralstonia nicotianae (strain ATCC BAA-1114 / GMI1000) (Ralstonia solanacearum), this protein is Small ribosomal subunit protein uS17.